A 324-amino-acid chain; its full sequence is Serine/threonine-protein phosphatase PP1 isozyme 8 (324 aa).

Residues Asp-66, His-68, Asp-94, and Asn-126 each contribute to the Mn(2+) site. The active-site Proton donor is the His-127. 2 residues coordinate Mn(2+): His-175 and His-250.

It belongs to the PPP phosphatase family. PP-1 subfamily. It depends on Mn(2+) as a cofactor. Expressed in roots, rosettes and flowers.

Its subcellular location is the nucleus. The protein resides in the cytoplasm. It carries out the reaction O-phospho-L-seryl-[protein] + H2O = L-seryl-[protein] + phosphate. It catalyses the reaction O-phospho-L-threonyl-[protein] + H2O = L-threonyl-[protein] + phosphate. With respect to regulation, phosphatase activity is strongly reduced by the protein phosphatase inhibitor 2 (I-2). In terms of biological role, serine/threonine-protein phosphatase that possesses phosphatase activity toward para-nitrophenyl phosphate (pNPP) in vitro. The polypeptide is Serine/threonine-protein phosphatase PP1 isozyme 8 (Arabidopsis thaliana (Mouse-ear cress)).